The primary structure comprises 341 residues: Glyceraldehyde-3-phosphate dehydrogenase, cytosolic (341 aa).

NAD(+) is bound by residues 14-15 (RI) and D36. D-glyceraldehyde 3-phosphate-binding positions include 153–155 (SCT), T184, 213–214 (TG), and R236. C154 (nucleophile) is an active-site residue. N318 serves as a coordination point for NAD(+).

Belongs to the glyceraldehyde-3-phosphate dehydrogenase family. Homotetramer.

It localises to the cytoplasm. It carries out the reaction D-glyceraldehyde 3-phosphate + phosphate + NAD(+) = (2R)-3-phospho-glyceroyl phosphate + NADH + H(+). It functions in the pathway carbohydrate degradation; glycolysis; pyruvate from D-glyceraldehyde 3-phosphate: step 1/5. Key enzyme in glycolysis that catalyzes the first step of the pathway by converting D-glyceraldehyde 3-phosphate (G3P) into 3-phospho-D-glyceroyl phosphate. Essential for the maintenance of cellular ATP levels and carbohydrate metabolism. The chain is Glyceraldehyde-3-phosphate dehydrogenase, cytosolic (GAPC) from Chlamydomonas reinhardtii (Chlamydomonas smithii).